The primary structure comprises 173 residues: MTIAKDSMVNDGIRAREVRLIASDGEQLGVKSRQEAMQIAEDASLDLVLVAPKAKPPVARIMDYGKYRFEQQKKDREARKKQKVVSIKEVRLSPAIDTNDFNTKLKHAEKFLSKGDKVRVSIRFKGRAITHKDIGRQVLNRMIEATKEFSTVEAYPKMDGRSMFLVLAPKTDK.

It belongs to the IF-3 family. As to quaternary structure, monomer.

It localises to the cytoplasm. Functionally, IF-3 binds to the 30S ribosomal subunit and shifts the equilibrium between 70S ribosomes and their 50S and 30S subunits in favor of the free subunits, thus enhancing the availability of 30S subunits on which protein synthesis initiation begins. This chain is Translation initiation factor IF-3, found in Lactiplantibacillus plantarum (strain ATCC BAA-793 / NCIMB 8826 / WCFS1) (Lactobacillus plantarum).